The following is a 118-amino-acid chain: Small ribosomal subunit protein bS6 (118 aa).

Belongs to the bacterial ribosomal protein bS6 family.

Functionally, binds together with bS18 to 16S ribosomal RNA. The sequence is that of Small ribosomal subunit protein bS6 from Saccharopolyspora erythraea (strain ATCC 11635 / DSM 40517 / JCM 4748 / NBRC 13426 / NCIMB 8594 / NRRL 2338).